A 144-amino-acid polypeptide reads, in one-letter code: Large ribosomal subunit protein uL15 (144 aa).

Positions M1–P56 are disordered. The span at R21–A31 shows a compositional bias: gly residues.

The protein belongs to the universal ribosomal protein uL15 family. Part of the 50S ribosomal subunit.

In terms of biological role, binds to the 23S rRNA. The polypeptide is Large ribosomal subunit protein uL15 (Burkholderia ambifaria (strain MC40-6)).